We begin with the raw amino-acid sequence, 250 residues long: MTSIHSPVTRKEDTELKRPDLRGKFVCSSCSQNFQHSASLNRHRQLMHSNEHTCMMCERALNQKETIREHMRNEHNLAQVFTCGCCNWTFASKRQLTEHTKCIQGTGAPGDTIPIAKSINAPGSLIQSTIQGTPPVVKTGRKRPMGGSLSPSSSVSTSISSRDASGSPPPTEEEAERKVLFDNAVDTILQSKFFTYQQITEVDTWVKIIESANTLADTLQRIKKSQKVKAEGPAVESKMIPEKHVKQEIE.

C2H2-type zinc fingers lie at residues 25 to 48 (FVCS…QLMH) and 52 to 75 (HTCM…RNEH). The C2H2-type 3; degenerate zinc finger occupies 81–104 (FTCGCCNWTFASKRQLTEHTKCIQ). Disordered regions lie at residues 126-177 (IQST…EAER) and 226-250 (QKVK…QEIE). Over residues 148–165 (SLSPSSSVSTSISSRDAS) the composition is skewed to low complexity. Positions 239–250 (MIPEKHVKQEIE) are enriched in basic and acidic residues.

Its function is as follows. Involved in regulating left/right asymmetric differentiation of the gustatory ASE neurons. Plays a role in modulating expression of LIM/homeobox protein lim-6. The protein is Zinc finger protein lsy-27 of Caenorhabditis elegans.